The chain runs to 254 residues: MRKPLVGINMKNYINTRAQTSEWLEATIPLLGNFSDVDTFIFPSMGTLETTANLLAGTSFGFGPQNMAPEKSGPLTGEFSVESIIDLSANYVEIGHAERKNLFHEKTSEIAKKIQLALDEKITPVVCVGEGIRANDTNELKNALKKQIEALFDTIQVTQFKNVVLAYEPEWAIGKANSADTDYIESAHQALREIIRELGGDETLVRIIYGGSVSKENAAEIVRQKNVDGLFVGRFGHKPQNFADIVSIVSKTKG.

Substrate is bound at residue 9–11 (NMK). The active-site Electrophile is the His96. The active-site Proton acceptor is Glu168. Positions 174 and 212 each coordinate substrate.

Belongs to the triosephosphate isomerase family. As to quaternary structure, homodimer.

The protein localises to the cytoplasm. It carries out the reaction D-glyceraldehyde 3-phosphate = dihydroxyacetone phosphate. It participates in carbohydrate biosynthesis; gluconeogenesis. It functions in the pathway carbohydrate degradation; glycolysis; D-glyceraldehyde 3-phosphate from glycerone phosphate: step 1/1. Its function is as follows. Involved in the gluconeogenesis. Catalyzes stereospecifically the conversion of dihydroxyacetone phosphate (DHAP) to D-glyceraldehyde-3-phosphate (G3P). The chain is Probable triosephosphate isomerase 2 from Listeria monocytogenes serovar 1/2a (strain ATCC BAA-679 / EGD-e).